The sequence spans 72 residues: Prokaryotic ubiquitin-like protein Pup (72 aa).

Positions 1-10 (MATRDSGGGQ) are enriched in gly residues. A disordered region spans residues 1 to 41 (MATRDSGGGQQRADRRAEEIDDVATEDTSASDLKERHEKLS). A coiled-coil region spans residues 27 to 61 (DTSASDLKERHEKLSEDVDSLLDEIDDVLEENAEE). The segment at 28 to 66 (TSASDLKERHEKLSEDVDSLLDEIDDVLEENAEEFVKGY) is ARC ATPase binding. A compositionally biased stretch (basic and acidic residues) spans 32-41 (DLKERHEKLS). At Q72 the chain carries Deamidated glutamine. Q72 participates in a covalent cross-link: Isoglutamyl lysine isopeptide (Gln-Lys) (interchain with K-? in acceptor proteins).

This sequence belongs to the prokaryotic ubiquitin-like protein family. As to quaternary structure, strongly interacts with the proteasome-associated ATPase ARC through a hydrophobic interface; the interacting region of Pup lies in its C-terminal half. There is one Pup binding site per ARC hexamer ring. In terms of processing, is modified by deamidation of its C-terminal glutamine to glutamate by the deamidase Dop, a prerequisite to the subsequent pupylation process.

It functions in the pathway protein degradation; proteasomal Pup-dependent pathway. In terms of biological role, protein modifier that is covalently attached to lysine residues of substrate proteins, thereby targeting them for proteasomal degradation. The tagging system is termed pupylation. The chain is Prokaryotic ubiquitin-like protein Pup from Frankia casuarinae (strain DSM 45818 / CECT 9043 / HFP020203 / CcI3).